The following is a 668-amino-acid chain: Threonine--tRNA ligase (668 aa).

One can recognise a TGS domain in the interval 1–61 (MSDLKIALTH…ADGDQVEPVA (61 aa)). The interval 265–564 (DHRKLGRDLD…LVEHYAGAFP (300 aa)) is catalytic. Residues Cys358, His409, and His541 each coordinate Zn(2+).

It belongs to the class-II aminoacyl-tRNA synthetase family. As to quaternary structure, homodimer. Requires Zn(2+) as cofactor.

It localises to the cytoplasm. The enzyme catalyses tRNA(Thr) + L-threonine + ATP = L-threonyl-tRNA(Thr) + AMP + diphosphate + H(+). Its function is as follows. Catalyzes the attachment of threonine to tRNA(Thr) in a two-step reaction: L-threonine is first activated by ATP to form Thr-AMP and then transferred to the acceptor end of tRNA(Thr). Also edits incorrectly charged L-seryl-tRNA(Thr). This is Threonine--tRNA ligase from Nocardioides sp. (strain ATCC BAA-499 / JS614).